The following is a 145-amino-acid chain: Mediator of RNA polymerase II transcription subunit 21 (145 aa).

A coiled-coil region spans residues 79–112 (EESTAALQAASLRQLEEENQEAAARLEEVVYRGD).

Belongs to the Mediator complex subunit 21 family. As to quaternary structure, component of the Mediator complex.

Its subcellular location is the nucleus. Component of the Mediator complex, a coactivator involved in the regulated transcription of nearly all RNA polymerase II-dependent genes. Mediator functions as a bridge to convey information from gene-specific regulatory proteins to the basal RNA polymerase II transcription machinery. Mediator is recruited to promoters by direct interactions with regulatory proteins and serves as a scaffold for the assembly of a functional preinitiation complex with RNA polymerase II and the general transcription factors. This chain is Mediator of RNA polymerase II transcription subunit 21 (med21), found in Danio rerio (Zebrafish).